The primary structure comprises 240 residues: Short palate, lung and nasal epithelium carcinoma-associated protein 2B (240 aa).

The N-terminal stretch at 1–19 (MVQLWKLVLLCGLLAGTSA) is a signal peptide. The cysteines at positions 163 and 206 are disulfide-linked.

Belongs to the BPI/LBP/Plunc superfamily. Plunc family. In terms of tissue distribution, parotid glands.

The protein localises to the secreted. The sequence is that of Short palate, lung and nasal epithelium carcinoma-associated protein 2B (SPLUNC2B) from Bos taurus (Bovine).